The chain runs to 552 residues: TBCC domain-containing protein 1 (552 aa).

One can recognise a C-CAP/cofactor C-like domain in the interval 304–435 (PRLHRIVVMS…LEDHMARTGL (132 aa)).

The protein belongs to the TBCC family. As to expression, expressed in brain and testis (at protein level).

The protein localises to the cytoplasm. It is found in the cytoskeleton. It localises to the microtubule organizing center. Its subcellular location is the centrosome. The protein resides in the spindle pole. Plays a role in the regulation of centrosome and Golgi apparatus positioning, with consequences on cell shape and cell migration. This chain is TBCC domain-containing protein 1 (Tbccd1), found in Mus musculus (Mouse).